We begin with the raw amino-acid sequence, 299 residues long: Palmitoyltransferase ZDHHC3 (299 aa).

The Cytoplasmic segment spans residues 1-47 (MMLIPTHHFRNIERKPEYLQPEKCVPPPYPGPVGTMWFIRDGCGIAC). Tyr-18 carries the post-translational modification Phosphotyrosine. A helical membrane pass occupies residues 48 to 68 (AIVTWFLVLYAEFVVLFVMLI). Topologically, residues 69–72 (PSRD) are extracellular. The chain crosses the membrane as a helical span at residues 73 to 93 (YVYSIINGIVFNLLAFLALAS). The Cytoplasmic segment spans residues 94–171 (HCRAMLTDPG…NCVGENNQKY (78 aa)). One can recognise a DHHC domain in the interval 127–177 (YKCPKCCSIKPDRAHHCSVCKRCIRKMDHHCPWVNNCVGENNQKYFVLFTM). A lipid anchor (S-palmitoyl cysteine) is attached at Cys-146. Residue Cys-157 is the S-palmitoyl cysteine intermediate of the active site. The helical transmembrane segment at 172-192 (FVLFTMYIALISLHALIMVGF) threads the bilayer. Residues 193-214 (HFLHCFEEDWTKCSSFSPPTTV) are Extracellular-facing. Residues 215–235 (ILLILLCFEGLLFLIFTSVMF) form a helical membrane-spanning segment. Topologically, residues 236 to 299 (GTQVHSICTD…GKADPYQYVV (64 aa)) are cytoplasmic.

This sequence belongs to the DHHC palmitoyltransferase family. In terms of assembly, monomer. Homooligomers. The monomeric form has a higher catalytic activity. Forms heterooligomers with ZDHHC7. Interacts with TNFRSF10A. Post-translationally, autopalmitoylated. In terms of processing, phosphorylation by FGFR1 and SRC probably regulates the palmitoyltransferase activity. Widely expressed with significant expression in heart, lung, liver, skeletal muscle, kidney, testis, thymus, small intestine and leukocyte.

The protein resides in the golgi apparatus membrane. The enzyme catalyses L-cysteinyl-[protein] + hexadecanoyl-CoA = S-hexadecanoyl-L-cysteinyl-[protein] + CoA. The catalysed reaction is L-cysteinyl-[protein] + tetradecanoyl-CoA = S-tetradecanoyl-L-cysteinyl-[protein] + CoA. It carries out the reaction L-cysteinyl-[protein] + octadecanoyl-CoA = S-octadecanoyl-L-cysteinyl-[protein] + CoA. Its function is as follows. Golgi-localized palmitoyltransferase that catalyzes the addition of palmitate onto various protein substrates. Has no stringent fatty acid selectivity and in addition to palmitate can also transfer onto target proteins myristate from tetradecanoyl-CoA and stearate from octadecanoyl-CoA. Plays an important role in G protein-coupled receptor signaling pathways involving GNAQ and potentially other heterotrimeric G proteins by regulating their dynamic association with the plasma membrane. Palmitoylates ITGA6 and ITGB4, thereby regulating the alpha-6/beta-4 integrin localization, expression and function in cell adhesion to laminin. Plays a role in the TRAIL-activated apoptotic signaling pathway most probably through the palmitoylation and localization to the plasma membrane of TNFRSF10A. In the brain, by palmitoylating the gamma subunit GABRG2 of GABA(A) receptors and regulating their postsynaptic accumulation, plays a role in synaptic GABAergic inhibitory function and GABAergic innervation. Palmitoylates the neuronal protein GAP43 which is also involved in the formation of GABAergic synapses. Palmitoylates NCDN thereby regulating its association with endosome membranes. Probably palmitoylates PRCD and is involved in its proper localization within the photoreceptor. Could mediate the palmitoylation of NCAM1 and regulate neurite outgrowth. Could palmitoylate DNAJC5 and regulate its localization to Golgi membranes. Also constitutively palmitoylates DLG4. May also palmitoylate SNAP25. Could palmitoylate the glutamate receptors GRIA1 and GRIA2 but this has not been confirmed in vivo. Could also palmitoylate the D(2) dopamine receptor DRD2. May also palmitoylate LAMTOR1, promoting its localization to lysosomal membranes. Palmitoylates the Toll-like receptor 9/TLR9 in the Golgi and thereby regulates TLR9 trafficking to endosomes. May palmitoylate CALHM1 and CALHM3 subunits of gustatory voltage-gated ion channels and modulate channel gating and kinetics. May also function as a calcium transporter. In Homo sapiens (Human), this protein is Palmitoyltransferase ZDHHC3.